The sequence spans 278 residues: 4-deoxy-L-threo-5-hexosulose-uronate ketol-isomerase (278 aa).

Positions 196, 198, 203, and 245 each coordinate Zn(2+).

It belongs to the KduI family. Zn(2+) serves as cofactor.

The enzyme catalyses 5-dehydro-4-deoxy-D-glucuronate = 3-deoxy-D-glycero-2,5-hexodiulosonate. Its pathway is glycan metabolism; pectin degradation; 2-dehydro-3-deoxy-D-gluconate from pectin: step 4/5. Catalyzes the isomerization of 5-dehydro-4-deoxy-D-glucuronate to 3-deoxy-D-glycero-2,5-hexodiulosonate. The chain is 4-deoxy-L-threo-5-hexosulose-uronate ketol-isomerase from Burkholderia cenocepacia (strain ATCC BAA-245 / DSM 16553 / LMG 16656 / NCTC 13227 / J2315 / CF5610) (Burkholderia cepacia (strain J2315)).